The following is a 235-amino-acid chain: Dual specificity protein phosphatase 15 (235 aa).

Glycine 2 is lipidated: N-myristoyl glycine. One can recognise a Tyrosine-protein phosphatase domain in the interval 4 to 144; that stretch reads GMTKVLPGLY…LEEFGWANSQ (141 aa). Residue cysteine 88 is the Phosphocysteine intermediate of the active site. Residues 183–193 show a composition bias toward low complexity; sequence AASATTASSAA. Residues 183–212 are disordered; that stretch reads AASATTASSAAEGTLQRLVPRSPRDSHQPL.

Belongs to the protein-tyrosine phosphatase family. Non-receptor class dual specificity subfamily. Isoform 1 is expressed in testis; predominantly in developing spermatocytes (at protein level). Isoform 2 is highly expressed in testis. Expressed in spinal cord and specifically in oligodendroglial cells. Expressed in embryonic brain cortex; down-regulated in mice with experimental autoimmune encephalomyelitis (EAE).

It localises to the cell membrane. The enzyme catalyses O-phospho-L-tyrosyl-[protein] + H2O = L-tyrosyl-[protein] + phosphate. It catalyses the reaction O-phospho-L-seryl-[protein] + H2O = L-seryl-[protein] + phosphate. It carries out the reaction O-phospho-L-threonyl-[protein] + H2O = L-threonyl-[protein] + phosphate. In terms of biological role, may dephosphorylate MAPK13, ATF2, ERBB3, PDGFRB and SNX6. May play a role in the regulation of oligodendrocyte differentiation. May play a role in the regulation of myelin formation. Involved in the regulation of Erk1/2 phosphorylation in Schwann cells; the signaling may be linked to the regulation of myelination. The chain is Dual specificity protein phosphatase 15 from Mus musculus (Mouse).